The sequence spans 148 residues: UPF0178 protein SUN_1096 (148 aa).

The protein belongs to the UPF0178 family.

The protein is UPF0178 protein SUN_1096 of Sulfurovum sp. (strain NBC37-1).